The primary structure comprises 133 residues: Core atranone cluster (CAC) protein 11 (133 aa).

Its pathway is mycotoxin biosynthesis. Part of the core atranone cluster (CAC) which products are predicted to catalyze most or all steps of mycotoxin atranone synthesis, starting from geranylgeranyl pyrophosphate (GGPP). The initial cyclization of GGPP to dolabellane is probably performed by the terpene cyclase ATR13. The Baeyer-Villiger oxidation near the end of the atranone synthesis, which converts atranones D and E to atranones F and G is predicted to be catalyzed by the monooxygenase ATR8. Of the CAC's other predicted gene products, the reducing PKS ATR6 might synthesize a polyketide chain. This polyketide is probably transferred onto the atranone backbone by the polyketide transferase ATR5. Other predicted CAC products include 4 oxygenases (ATR2, ATR3, ATR4, and ATR14), 3 short-chain reductases (ATR7, ATR9, and ATR10), and a methyltransferase (ATR12). These may all be involved in the various steps of atranone biosynthesis, although their specific roles must await experimental determination. This chain is Core atranone cluster (CAC) protein 11, found in Stachybotrys chlorohalonatus (strain IBT 40285).